The primary structure comprises 671 residues: Chitin biosynthesis protein CHS5 (671 aa).

Positions 78–168 constitute a Fibronectin type-III domain; that stretch reads KPESPVLKIV…EKVILRTHKM (91 aa). The BRCT domain occupies 166–262; sequence HKMTDMSGIT…RIVGVRGFYL (97 aa). The tract at residues 280-671 is disordered; sequence EELSYSKENE…KKNKKKGKKK (392 aa). Thr305 bears the Phosphothreonine mark. The span at 311-321 shows a compositional bias: polar residues; the sequence is ASPNDNESNPS. Basic and acidic residues predominate over residues 322 to 332; it reads EAKEQGEKSGH. Residues Ser338, Ser362, Ser365, Ser383, and Ser384 each carry the phosphoserine modification. Over residues 349 to 365 the composition is skewed to polar residues; the sequence is ALENETTIETVNPSVRS. Residues 409–419 show a composition bias toward basic and acidic residues; the sequence is KSEDTDTHSNE. Polar residues predominate over residues 434–443; it reads NNITTESAGE. Residues 461–486 show a composition bias toward acidic residues; sequence EIETPEVNESIEDANEPAEDSNEPVE. Positions 487–521 are enriched in basic and acidic residues; sequence DSNKPVKDSNKPVEDSNKPVEDSNKPVEDSNKPVE. Residues 522–538 show a composition bias toward acidic residues; it reads DANEPVEDTSEPVEDAG. The segment covering 542–551 has biased composition (polar residues); it reads QETNEFTTDI. 2 positions are modified to phosphoserine: Ser573 and Ser579. Over residues 581–591 the composition is skewed to basic and acidic residues; that stretch reads EDVKPEEKGSE. A Glycyl lysine isopeptide (Lys-Gly) (interchain with G-Cter in ubiquitin) cross-link involves residue Lys584. Ser590 is modified (phosphoserine). Polar residues predominate over residues 606-620; the sequence is GESTTHQKTEASASL. The segment covering 627-638 has biased composition (acidic residues); the sequence is EEQETTEAEVNT. A compositionally biased stretch (basic residues) spans 657 to 671; that stretch reads NKKKNKKNKKKGKKK.

The protein belongs to the CHS5 family. As to quaternary structure, component of the CHS5/6 complex composed of the 4 CHAPS proteins BCH1, BCH2, BUD7, and CHS6 as well as at least CHS5 and GTP-bound ARF1. The complex interacts with the cargo protein CHS3.

The protein resides in the golgi apparatus. The protein localises to the trans-Golgi network membrane. Functionally, component of the CHS5/6 complex which mediates export of specific cargo proteins, including chitin synthase CHS3. Also involved in targeting FUS1 to sites of polarized growth. The sequence is that of Chitin biosynthesis protein CHS5 (CHS5) from Saccharomyces cerevisiae (strain ATCC 204508 / S288c) (Baker's yeast).